A 167-amino-acid chain; its full sequence is Small ribosomal subunit protein uS5 (167 aa).

An S5 DRBM domain is found at 11–74 (LQEKLIAVNR…EKARRAMINV (64 aa)).

This sequence belongs to the universal ribosomal protein uS5 family. Part of the 30S ribosomal subunit. Contacts proteins S4 and S8.

Functionally, with S4 and S12 plays an important role in translational accuracy. In terms of biological role, located at the back of the 30S subunit body where it stabilizes the conformation of the head with respect to the body. The polypeptide is Small ribosomal subunit protein uS5 (Yersinia pseudotuberculosis serotype O:1b (strain IP 31758)).